Here is a 334-residue protein sequence, read N- to C-terminus: N-acetyl-gamma-glutamyl-phosphate reductase (334 aa).

Cys-142 is a catalytic residue.

This sequence belongs to the NAGSA dehydrogenase family. Type 1 subfamily.

Its subcellular location is the cytoplasm. The catalysed reaction is N-acetyl-L-glutamate 5-semialdehyde + phosphate + NADP(+) = N-acetyl-L-glutamyl 5-phosphate + NADPH + H(+). It functions in the pathway amino-acid biosynthesis; L-arginine biosynthesis; N(2)-acetyl-L-ornithine from L-glutamate: step 3/4. Catalyzes the NADPH-dependent reduction of N-acetyl-5-glutamyl phosphate to yield N-acetyl-L-glutamate 5-semialdehyde. This chain is N-acetyl-gamma-glutamyl-phosphate reductase, found in Pelodictyon phaeoclathratiforme (strain DSM 5477 / BU-1).